We begin with the raw amino-acid sequence, 588 residues long: BTB/POZ domain-containing protein At3g26490 (588 aa).

The region spanning 28 to 99 (NDLVIQVKST…CYGITITLCA (72 aa)) is the BTB domain. Positions 218 to 507 (RWWGEDLAEL…VQILFVEQAR (290 aa)) constitute an NPH3 domain. Phosphoserine is present on residues serine 376 and serine 378. Residue tyrosine 448 is modified to Phosphotyrosine. A disordered region spans residues 529-554 (FTTRREEGGQEEEERDETKPSGGFLQ).

Belongs to the NPH3 family.

It participates in protein modification; protein ubiquitination. In terms of biological role, may act as a substrate-specific adapter of an E3 ubiquitin-protein ligase complex (CUL3-RBX1-BTB) which mediates the ubiquitination and subsequent proteasomal degradation of target proteins. This chain is BTB/POZ domain-containing protein At3g26490, found in Arabidopsis thaliana (Mouse-ear cress).